The following is a 614-amino-acid chain: Dihydroxy-acid dehydratase (614 aa).

A Mg(2+)-binding site is contributed by Asp81. Cys122 provides a ligand contact to [2Fe-2S] cluster. Mg(2+) contacts are provided by Asp123 and Lys124. Position 124 is an N6-carboxylysine (Lys124). Cys193 serves as a coordination point for [2Fe-2S] cluster. Mg(2+) is bound at residue Glu489. The Proton acceptor role is filled by Ser515.

It belongs to the IlvD/Edd family. Homodimer. [2Fe-2S] cluster serves as cofactor. It depends on Mg(2+) as a cofactor.

The enzyme catalyses (2R)-2,3-dihydroxy-3-methylbutanoate = 3-methyl-2-oxobutanoate + H2O. It carries out the reaction (2R,3R)-2,3-dihydroxy-3-methylpentanoate = (S)-3-methyl-2-oxopentanoate + H2O. The protein operates within amino-acid biosynthesis; L-isoleucine biosynthesis; L-isoleucine from 2-oxobutanoate: step 3/4. Its pathway is amino-acid biosynthesis; L-valine biosynthesis; L-valine from pyruvate: step 3/4. Functionally, functions in the biosynthesis of branched-chain amino acids. Catalyzes the dehydration of (2R,3R)-2,3-dihydroxy-3-methylpentanoate (2,3-dihydroxy-3-methylvalerate) into 2-oxo-3-methylpentanoate (2-oxo-3-methylvalerate) and of (2R)-2,3-dihydroxy-3-methylbutanoate (2,3-dihydroxyisovalerate) into 2-oxo-3-methylbutanoate (2-oxoisovalerate), the penultimate precursor to L-isoleucine and L-valine, respectively. This chain is Dihydroxy-acid dehydratase, found in Marinomonas sp. (strain MWYL1).